We begin with the raw amino-acid sequence, 568 residues long: Proline--tRNA ligase (568 aa).

Belongs to the class-II aminoacyl-tRNA synthetase family. ProS type 1 subfamily. As to quaternary structure, homodimer.

The protein localises to the cytoplasm. The catalysed reaction is tRNA(Pro) + L-proline + ATP = L-prolyl-tRNA(Pro) + AMP + diphosphate. In terms of biological role, catalyzes the attachment of proline to tRNA(Pro) in a two-step reaction: proline is first activated by ATP to form Pro-AMP and then transferred to the acceptor end of tRNA(Pro). As ProRS can inadvertently accommodate and process non-cognate amino acids such as alanine and cysteine, to avoid such errors it has two additional distinct editing activities against alanine. One activity is designated as 'pretransfer' editing and involves the tRNA(Pro)-independent hydrolysis of activated Ala-AMP. The other activity is designated 'posttransfer' editing and involves deacylation of mischarged Ala-tRNA(Pro). The misacylated Cys-tRNA(Pro) is not edited by ProRS. In Listeria monocytogenes serotype 4b (strain F2365), this protein is Proline--tRNA ligase.